Consider the following 97-residue polypeptide: Co-chaperonin GroES (97 aa).

The protein belongs to the GroES chaperonin family. As to quaternary structure, heptamer of 7 subunits arranged in a ring. Interacts with the chaperonin GroEL.

Its subcellular location is the cytoplasm. Its function is as follows. Together with the chaperonin GroEL, plays an essential role in assisting protein folding. The GroEL-GroES system forms a nano-cage that allows encapsulation of the non-native substrate proteins and provides a physical environment optimized to promote and accelerate protein folding. GroES binds to the apical surface of the GroEL ring, thereby capping the opening of the GroEL channel. The protein is Co-chaperonin GroES of Elusimicrobium minutum (strain Pei191).